The sequence spans 656 residues: Methionine--tRNA ligase (656 aa).

The 'HIGH' region signature appears at 13 to 23 (YYPSGNLHIGH). Positions 308 to 312 (KMSKS) match the 'KMSKS' region motif. K311 serves as a coordination point for ATP. The tRNA-binding domain maps to 556 to 656 (DFDKVEIKAA…SAIPNGAVIK (101 aa)).

The protein belongs to the class-I aminoacyl-tRNA synthetase family. MetG type 2B subfamily. Homodimer.

Its subcellular location is the cytoplasm. The enzyme catalyses tRNA(Met) + L-methionine + ATP = L-methionyl-tRNA(Met) + AMP + diphosphate. In terms of biological role, is required not only for elongation of protein synthesis but also for the initiation of all mRNA translation through initiator tRNA(fMet) aminoacylation. The chain is Methionine--tRNA ligase from Staphylococcus epidermidis (strain ATCC 12228 / FDA PCI 1200).